Reading from the N-terminus, the 297-residue chain is HTH-type transcriptional regulator ArgP (297 aa).

In terms of domain architecture, HTH lysR-type spans 4-60 (PDYRTLQALDAVIRERGFERAAQKLCITQSAVSQRIKQLENMFGQPLLVRTVPPRPT). A DNA-binding region (H-T-H motif) is located at residues 21-40 (FERAAQKLCITQSAVSQRIK).

It belongs to the LysR transcriptional regulatory family. In terms of assembly, homodimer.

Controls the transcription of genes involved in arginine and lysine metabolism. In Citrobacter koseri (strain ATCC BAA-895 / CDC 4225-83 / SGSC4696), this protein is HTH-type transcriptional regulator ArgP.